A 99-amino-acid polypeptide reads, in one-letter code: Large ribosomal subunit protein bL21 (99 aa).

It belongs to the bacterial ribosomal protein bL21 family. Part of the 50S ribosomal subunit. Contacts protein L20.

This protein binds to 23S rRNA in the presence of protein L20. The protein is Large ribosomal subunit protein bL21 of Mesomycoplasma hyopneumoniae (strain 232) (Mycoplasma hyopneumoniae).